The following is a 791-amino-acid chain: Nuclear cap-binding protein subunit 1-B (791 aa).

The tract at residues 1 to 24 (MSRRRHSDENDGGQPHKRRRTSEP) is disordered. The MIF4G domain occupies 28-240 (EDRLESLICR…CLWAQVQKLK (213 aa)). The stretch at 641 to 714 (LHSTIRKMNK…SEQKNLFLVI (74 aa)) forms a coiled coil. The disordered stretch occupies residues 664 to 687 (QRLAKQHKHRDSDDNDEDSGRKDG).

Belongs to the NCBP1 family. Component of the nuclear cap-binding complex (CBC), a heterodimer composed of ncbp1/cbp80 and ncbp2/cbp20 that interacts with m7GpppG-capped RNA. Component of an alternative nuclear cap-binding complex (CBC) composed of ncbp1/cbp80 and ncbp3.

It is found in the nucleus. It localises to the cytoplasm. In terms of biological role, component of the cap-binding complex (CBC), which binds cotranscriptionally to the 5'-cap of pre-mRNAs and is involved in various processes such as pre-mRNA splicing, translation regulation, nonsense-mediated mRNA decay, RNA-mediated gene silencing (RNAi) by microRNAs (miRNAs) and mRNA export. The CBC complex is involved in mRNA export from the nucleus, leading to the recruitment of the mRNA export machinery to the 5'-end of mRNA and to mRNA export in a 5' to 3' direction through the nuclear pore. The CBC complex is also involved in mediating U snRNA and intronless mRNAs export from the nucleus. The CBC complex is essential for a pioneer round of mRNA translation, before steady state translation when the CBC complex is replaced by cytoplasmic cap-binding protein eIF4E. The pioneer round of mRNA translation mediated by the CBC complex plays a central role in nonsense-mediated mRNA decay (NMD), NMD only taking place in mRNAs bound to the CBC complex, but not on eIF4E-bound mRNAs. The CBC complex enhances NMD in mRNAs containing at least one exon-junction complex (EJC), promoting the interaction between UPF1 and UPF2. The CBC complex is also involved in 'failsafe' NMD, which is independent of the EJC complex, while it does not participate in Staufen-mediated mRNA decay (SMD). During cell proliferation, the CBC complex is also involved in microRNAs (miRNAs) biogenesis via its interaction with SRRT/ARS2 and is required for miRNA-mediated RNA interference. The CBC complex also acts as a negative regulator of parn, thereby acting as an inhibitor of mRNA deadenylation. In the CBC complex, NCBP1/CBP80 does not bind directly capped RNAs (m7GpppG-capped RNA) but is required to stabilize the movement of the N-terminal loop of NCBP2/CBP20 and lock the CBC into a high affinity cap-binding state with the cap structure. Associates with NCBP3 to form an alternative cap-binding complex (CBC) which plays a key role in mRNA export. The conventional CBC with NCBP2 binds both small nuclear RNA (snRNA) and messenger (mRNA) and is involved in their export from the nucleus whereas the alternative CBC with NCBP3 does not bind snRNA and associates only with mRNA thereby playing a role only in mRNA export. The sequence is that of Nuclear cap-binding protein subunit 1-B (ncbp1-b) from Xenopus laevis (African clawed frog).